We begin with the raw amino-acid sequence, 152 residues long: Chemokine-like factor (152 aa).

The MARVEL domain maps to 13-133 (FCCTLKCFVK…DCALMCQKLR (121 aa)). Transmembrane regions (helical) follow at residues 19–39 (CFVK…FIVG), 46–66 (IVIT…YTCG), 81–101 (VINS…ALIP), and 108–128 (ILGG…CALM).

The protein belongs to the chemokine-like factor family. As to expression, ubiquitous.

The protein resides in the membrane. May play an important role in inflammation and regeneration of skeletal muscle. Essential for embryonic development. This chain is Chemokine-like factor (Cklf), found in Mus musculus (Mouse).